A 436-amino-acid polypeptide reads, in one-letter code: Trigger factor (436 aa).

The PPIase FKBP-type domain occupies 163 to 248 (GDRVTVDFEG…VKKIEAANLP (86 aa)).

It belongs to the FKBP-type PPIase family. Tig subfamily.

Its subcellular location is the cytoplasm. It catalyses the reaction [protein]-peptidylproline (omega=180) = [protein]-peptidylproline (omega=0). In terms of biological role, involved in protein export. Acts as a chaperone by maintaining the newly synthesized protein in an open conformation. Functions as a peptidyl-prolyl cis-trans isomerase. This Delftia acidovorans (strain DSM 14801 / SPH-1) protein is Trigger factor.